A 365-amino-acid chain; its full sequence is Histidinol-phosphate aminotransferase (365 aa).

Lysine 227 bears the N6-(pyridoxal phosphate)lysine mark.

The protein belongs to the class-II pyridoxal-phosphate-dependent aminotransferase family. Histidinol-phosphate aminotransferase subfamily. As to quaternary structure, homodimer. Pyridoxal 5'-phosphate is required as a cofactor.

It catalyses the reaction L-histidinol phosphate + 2-oxoglutarate = 3-(imidazol-4-yl)-2-oxopropyl phosphate + L-glutamate. It participates in amino-acid biosynthesis; L-histidine biosynthesis; L-histidine from 5-phospho-alpha-D-ribose 1-diphosphate: step 7/9. The sequence is that of Histidinol-phosphate aminotransferase from Polaromonas naphthalenivorans (strain CJ2).